We begin with the raw amino-acid sequence, 155 residues long: Small ribosomal subunit protein uS7 (155 aa).

This sequence belongs to the universal ribosomal protein uS7 family. In terms of assembly, part of the 30S ribosomal subunit. Contacts proteins S9 and S11.

In terms of biological role, one of the primary rRNA binding proteins, it binds directly to 16S rRNA where it nucleates assembly of the head domain of the 30S subunit. Is located at the subunit interface close to the decoding center, probably blocks exit of the E-site tRNA. This is Small ribosomal subunit protein uS7 from Chlorobium luteolum (strain DSM 273 / BCRC 81028 / 2530) (Pelodictyon luteolum).